Consider the following 358-residue polypeptide: Zinc transporter ZIP1 (358 aa).

At 1–7 the chain is on the extracellular side; it reads MDLLFAK. Residues 8-28 form a helical membrane-spanning segment; it reads IICIGIFLVVTTFGCFIPHLM. At 29 to 53 the chain is on the cytoplasmic side; the sequence is GLYKEKENEEKNKRVKNILSNLNCF. The helical transmembrane segment at 54-74 threads the bilayer; the sequence is GSGFIFSIIMFHLLPETIHII. Residues 75–91 are Extracellular-facing; that stretch reads SDHGNIRIFNTSDSQMK. A helical transmembrane segment spans residues 92–112; that stretch reads ILYIFFFVFIGFCMQLGLEYV. The Cytoplasmic segment spans residues 113-186; sequence LPVDTNICCV…GKFLEILTLQ (74 aa). Residues 187-207 form a helical membrane-spanning segment; it reads SFFLTISLAIHSCIEGMIIGT. At 208 to 213 the chain is on the extracellular side; that stretch reads STDVNY. Residues 214-234 form a helical membrane-spanning segment; that stretch reads VFISSFCILLHKWIAGVTVSL. Residues 235–246 are Cytoplasmic-facing; sequence SLNSNNMNKTLK. The helical transmembrane segment at 247 to 267 threads the bilayer; that stretch reads AILLLTFVFASPLGIVLGHMA. The Extracellular portion of the chain corresponds to 268–273; the sequence is KSAGQK. The helical transmembrane segment at 274 to 294 threads the bilayer; the sequence is VTCLINAVSIGTLLFIGCEIL. At 295–310 the chain is on the cytoplasmic side; that stretch reads LNEIKQNISRKVRLCK. A helical transmembrane segment spans residues 311-331; the sequence is WLSFCFSCLIAFALISFTTSM. Topologically, residues 332-358 are extracellular; it reads APHTHGDIDTHVHVHHHDHDHDHGHNH.

It belongs to the ZIP transporter (TC 2.A.5) family. As to quaternary structure, homodimer.

It localises to the plastid. It is found in the apicoplast. The protein resides in the cell membrane. The enzyme catalyses Zn(2+)(in) = Zn(2+)(out). It catalyses the reaction Fe(2+)(in) = Fe(2+)(out). Its function is as follows. Transporter for the divalent zinc cation. Mediates the influx of zinc into cells from extracellular space. Can transport divalent iron ions. Does not transport manganese and cadmium cations. In Plasmodium falciparum (isolate 3D7), this protein is Zinc transporter ZIP1.